A 184-amino-acid chain; its full sequence is Endoribonuclease YbeY (184 aa).

Zn(2+) contacts are provided by H118, H122, and H128.

The protein belongs to the endoribonuclease YbeY family. The cofactor is Zn(2+).

It localises to the cytoplasm. In terms of biological role, single strand-specific metallo-endoribonuclease involved in late-stage 70S ribosome quality control and in maturation of the 3' terminus of the 16S rRNA. This chain is Endoribonuclease YbeY, found in Nocardia farcinica (strain IFM 10152).